The sequence spans 243 residues: Probable transcriptional regulatory protein Ldb0677 (243 aa).

A disordered region spans residues 1–22 (MSGHSKWHNIQGRKNAQDAKRG).

The protein belongs to the TACO1 family.

It localises to the cytoplasm. This chain is Probable transcriptional regulatory protein Ldb0677, found in Lactobacillus delbrueckii subsp. bulgaricus (strain ATCC 11842 / DSM 20081 / BCRC 10696 / JCM 1002 / NBRC 13953 / NCIMB 11778 / NCTC 12712 / WDCM 00102 / Lb 14).